A 332-amino-acid chain; its full sequence is Phosphate acyltransferase (332 aa).

Belongs to the PlsX family. As to quaternary structure, homodimer. Probably interacts with PlsY.

The protein localises to the cytoplasm. It carries out the reaction a fatty acyl-[ACP] + phosphate = an acyl phosphate + holo-[ACP]. It functions in the pathway lipid metabolism; phospholipid metabolism. Catalyzes the reversible formation of acyl-phosphate (acyl-PO(4)) from acyl-[acyl-carrier-protein] (acyl-ACP). This enzyme utilizes acyl-ACP as fatty acyl donor, but not acyl-CoA. The protein is Phosphate acyltransferase of Streptococcus mutans serotype c (strain ATCC 700610 / UA159).